Here is a 257-residue protein sequence, read N- to C-terminus: UPF0246 protein A1S_2267 (257 aa).

This sequence belongs to the UPF0246 family.

The protein is UPF0246 protein A1S_2267 of Acinetobacter baumannii (strain ATCC 17978 / DSM 105126 / CIP 53.77 / LMG 1025 / NCDC KC755 / 5377).